Consider the following 242-residue polypeptide: Glycerol-3-phosphate acyltransferase (242 aa).

Helical transmembrane passes span 7–27, 61–81, 102–122, 135–155, 162–182, and 201–221; these read ISLL…IMFA, IAIG…ILLI, YYLT…PVYF, GFVF…WWTI, VSLA…IPWL, and DWYI…IIIW.

Belongs to the PlsY family. In terms of assembly, probably interacts with PlsX.

It is found in the cell membrane. It catalyses the reaction an acyl phosphate + sn-glycerol 3-phosphate = a 1-acyl-sn-glycero-3-phosphate + phosphate. Its pathway is lipid metabolism; phospholipid metabolism. Its function is as follows. Catalyzes the transfer of an acyl group from acyl-phosphate (acyl-PO(4)) to glycerol-3-phosphate (G3P) to form lysophosphatidic acid (LPA). This enzyme utilizes acyl-phosphate as fatty acyl donor, but not acyl-CoA or acyl-ACP. This Mycoplasmoides gallisepticum (strain R(low / passage 15 / clone 2)) (Mycoplasma gallisepticum) protein is Glycerol-3-phosphate acyltransferase.